A 778-amino-acid chain; its full sequence is Ent-sandaracopimaradiene synthase KSL3, chloroplastic (778 aa).

The transit peptide at 1–35 (MLLTSTNTLKISSQRKEWEAKDLTGMFHGQVNGRV) directs the protein to the chloroplast. Residues Asp-527, Glu-531, Asn-670, Asp-671, and Asp-678 each coordinate Mg(2+). Residues 527 to 531 (DDFFE) carry the DDXXD motif motif.

It belongs to the terpene synthase family. Mg(2+) serves as cofactor.

Its subcellular location is the plastid. The protein localises to the chloroplast. The enzyme catalyses ent-copalyl diphosphate = ent-sandaracopimara-8(14),15-diene + diphosphate. It catalyses the reaction ent-copalyl diphosphate = ent-(12E)-labda-8(17),12,14-triene + diphosphate. Its pathway is secondary metabolite biosynthesis; terpenoid biosynthesis. In terms of biological role, diterpene cyclase involved in the biosynthesis of labdane-related diterpenoids (LRDs) natural products. Catalyzes the cyclization of ent-CDP into ent-sandaracopimaradiene as a major, and ent-pimaradiene and ent-labdatriene as minor products. This Ricinus communis (Castor bean) protein is Ent-sandaracopimaradiene synthase KSL3, chloroplastic.